The chain runs to 278 residues: MAIKIYKPTTNGRRHMTSSDFAEITKTKPEKTLLESQSHTAGRNSYGRITVRHRGGGHKQKYRIIDFKRNKDNVKAVVNAIEYDPNRTANIALLHYTDGIKAYILAPKGLKVGDIVESGDSVDIKPGNALALKNIPTGTSIHNIELKPGKGGQLVRSAGASAQVLGFDGNYTLVRLQSGEVRKILSSCRATIGVVGNEQHSLIQLGKAGRKRWLGKRPQSRGSVMNPNDHPHGGGEGKAPVGRPQPMTPWGKKARGIKTRDVKKASEKLIIRHRKGSK.

Over residues 210–219 the composition is skewed to basic residues; it reads RKRWLGKRPQ. A disordered region spans residues 210-278; the sequence is RKRWLGKRPQ…LIIRHRKGSK (69 aa). Basic and acidic residues predominate over residues 258–270; the sequence is KTRDVKKASEKLI.

This sequence belongs to the universal ribosomal protein uL2 family. As to quaternary structure, part of the 50S ribosomal subunit. Forms a bridge to the 30S subunit in the 70S ribosome.

Its function is as follows. One of the primary rRNA binding proteins. Required for association of the 30S and 50S subunits to form the 70S ribosome, for tRNA binding and peptide bond formation. It has been suggested to have peptidyltransferase activity; this is somewhat controversial. Makes several contacts with the 16S rRNA in the 70S ribosome. This chain is Large ribosomal subunit protein uL2, found in Lactobacillus acidophilus (strain ATCC 700396 / NCK56 / N2 / NCFM).